The primary structure comprises 328 residues: DNA-directed RNA polymerase subunit alpha (328 aa).

The alpha N-terminal domain (alpha-NTD) stretch occupies residues M1–R233. The alpha C-terminal domain (alpha-CTD) stretch occupies residues F247–D328.

It belongs to the RNA polymerase alpha chain family. As to quaternary structure, homodimer. The RNAP catalytic core consists of 2 alpha, 1 beta, 1 beta' and 1 omega subunit. When a sigma factor is associated with the core the holoenzyme is formed, which can initiate transcription.

The catalysed reaction is RNA(n) + a ribonucleoside 5'-triphosphate = RNA(n+1) + diphosphate. Functionally, DNA-dependent RNA polymerase catalyzes the transcription of DNA into RNA using the four ribonucleoside triphosphates as substrates. In Wigglesworthia glossinidia brevipalpis, this protein is DNA-directed RNA polymerase subunit alpha.